We begin with the raw amino-acid sequence, 89 residues long: Small ribosomal subunit protein eS25A (89 aa).

Belongs to the eukaryotic ribosomal protein eS25 family. As to quaternary structure, component of the small ribosomal subunit (SSU). Mature yeast ribosomes consist of a small (40S) and a large (60S) subunit. The 40S small subunit contains 1 molecule of ribosomal RNA (18S rRNA) and at least 33 different proteins. The large 60S subunit contains 3 rRNA molecules (25S, 5.8S and 5S rRNA) and at least 46 different proteins.

Its subcellular location is the cytoplasm. Its function is as follows. Component of the ribosome, a large ribonucleoprotein complex responsible for the synthesis of proteins in the cell. The small ribosomal subunit (SSU) binds messenger RNAs (mRNAs) and translates the encoded message by selecting cognate aminoacyl-transfer RNA (tRNA) molecules. The large subunit (LSU) contains the ribosomal catalytic site termed the peptidyl transferase center (PTC), which catalyzes the formation of peptide bonds, thereby polymerizing the amino acids delivered by tRNAs into a polypeptide chain. The nascent polypeptides leave the ribosome through a tunnel in the LSU and interact with protein factors that function in enzymatic processing, targeting, and the membrane insertion of nascent chains at the exit of the ribosomal tunnel. In Schizosaccharomyces pombe (strain 972 / ATCC 24843) (Fission yeast), this protein is Small ribosomal subunit protein eS25A (rps2502).